We begin with the raw amino-acid sequence, 729 residues long: Fatty acid oxidation complex subunit alpha (729 aa).

The tract at residues 1–189 is enoyl-CoA hydratase/isomerase; the sequence is MLYKGDTLYL…KIGLVDGVVK (189 aa). Asp-296 is a binding site for substrate. The tract at residues 311-729 is 3-hydroxyacyl-CoA dehydrogenase; the sequence is ETPKQAAVLG…ARPVGDLKTA (419 aa). NAD(+)-binding positions include Met-324, Asp-343, 400 to 402, Lys-407, and Ser-429; that span reads IVE. His-450 functions as the For 3-hydroxyacyl-CoA dehydrogenase activity in the catalytic mechanism. An NAD(+)-binding site is contributed by Asn-453. Substrate is bound by residues Asn-500 and Tyr-660. The segment at 708–729 is disordered; the sequence is RHNEPYYPPVEPARPVGDLKTA.

In the N-terminal section; belongs to the enoyl-CoA hydratase/isomerase family. The protein in the C-terminal section; belongs to the 3-hydroxyacyl-CoA dehydrogenase family. In terms of assembly, heterotetramer of two alpha chains (FadB) and two beta chains (FadA).

The catalysed reaction is a (3S)-3-hydroxyacyl-CoA + NAD(+) = a 3-oxoacyl-CoA + NADH + H(+). The enzyme catalyses a (3S)-3-hydroxyacyl-CoA = a (2E)-enoyl-CoA + H2O. It carries out the reaction a 4-saturated-(3S)-3-hydroxyacyl-CoA = a (3E)-enoyl-CoA + H2O. It catalyses the reaction (3S)-3-hydroxybutanoyl-CoA = (3R)-3-hydroxybutanoyl-CoA. The catalysed reaction is a (3Z)-enoyl-CoA = a 4-saturated (2E)-enoyl-CoA. The enzyme catalyses a (3E)-enoyl-CoA = a 4-saturated (2E)-enoyl-CoA. It functions in the pathway lipid metabolism; fatty acid beta-oxidation. Functionally, involved in the aerobic and anaerobic degradation of long-chain fatty acids via beta-oxidation cycle. Catalyzes the formation of 3-oxoacyl-CoA from enoyl-CoA via L-3-hydroxyacyl-CoA. It can also use D-3-hydroxyacyl-CoA and cis-3-enoyl-CoA as substrate. In Escherichia coli O157:H7, this protein is Fatty acid oxidation complex subunit alpha.